Reading from the N-terminus, the 224-residue chain is Ribonuclease HII (224 aa).

The RNase H type-2 domain occupies 1-210; that stretch reads MKVAGADEAG…AKKIEEKFKR (210 aa). A divalent metal cation is bound by residues D7, E8, and D105.

Belongs to the RNase HII family. Mn(2+) serves as cofactor. The cofactor is Mg(2+).

Its subcellular location is the cytoplasm. The enzyme catalyses Endonucleolytic cleavage to 5'-phosphomonoester.. In terms of biological role, endonuclease that specifically degrades the RNA of RNA-DNA hybrids. The protein is Ribonuclease HII (rnhB) of Pyrococcus abyssi (strain GE5 / Orsay).